We begin with the raw amino-acid sequence, 192 residues long: Phosphoheptose isomerase (192 aa).

An SIS domain is found at 35–192; that stretch reads LIETLENQGK…CIERHFAHKN (158 aa). 50–52 is a substrate binding site; it reads NGG. Zn(2+) contacts are provided by His59 and Glu63. Substrate is bound by residues Glu63, 92-93, 118-120, Ser123, and Gln170; these read ND and STS. Zn(2+)-binding residues include Gln170 and His178.

The protein belongs to the SIS family. GmhA subfamily. As to quaternary structure, homotetramer. Zn(2+) serves as cofactor.

The protein localises to the cytoplasm. The catalysed reaction is 2 D-sedoheptulose 7-phosphate = D-glycero-alpha-D-manno-heptose 7-phosphate + D-glycero-beta-D-manno-heptose 7-phosphate. It participates in carbohydrate biosynthesis; D-glycero-D-manno-heptose 7-phosphate biosynthesis; D-glycero-alpha-D-manno-heptose 7-phosphate and D-glycero-beta-D-manno-heptose 7-phosphate from sedoheptulose 7-phosphate: step 1/1. In terms of biological role, catalyzes the isomerization of sedoheptulose 7-phosphate in D-glycero-D-manno-heptose 7-phosphate. This Helicobacter pylori (strain HPAG1) protein is Phosphoheptose isomerase.